The chain runs to 491 residues: Acetyl-coenzyme A carboxylase carboxyl transferase subunit beta, chloroplastic (491 aa).

A CoA carboxyltransferase N-terminal domain is found at 229–491 (LWVQCENCYG…FQLHGFFPLT (263 aa)). Positions 233, 236, 252, and 255 each coordinate Zn(2+). The C4-type zinc finger occupies 233–255 (CENCYGLNYKQFFRSRLNICEHC).

Belongs to the AccD/PCCB family. As to quaternary structure, acetyl-CoA carboxylase is a heterohexamer composed of biotin carboxyl carrier protein, biotin carboxylase and 2 subunits each of ACCase subunit alpha and ACCase plastid-coded subunit beta (accD). The cofactor is Zn(2+).

It localises to the plastid. The protein resides in the chloroplast stroma. It carries out the reaction N(6)-carboxybiotinyl-L-lysyl-[protein] + acetyl-CoA = N(6)-biotinyl-L-lysyl-[protein] + malonyl-CoA. The protein operates within lipid metabolism; malonyl-CoA biosynthesis; malonyl-CoA from acetyl-CoA: step 1/1. Component of the acetyl coenzyme A carboxylase (ACC) complex. Biotin carboxylase (BC) catalyzes the carboxylation of biotin on its carrier protein (BCCP) and then the CO(2) group is transferred by the transcarboxylase to acetyl-CoA to form malonyl-CoA. The chain is Acetyl-coenzyme A carboxylase carboxyl transferase subunit beta, chloroplastic from Lemna minor (Common duckweed).